We begin with the raw amino-acid sequence, 153 residues long: Pro-corazonin (153 aa).

A signal peptide spans 1-20 (MLRLLLLPLFLFTLSMACMG). Q21 is modified (pyrrolidone carboxylic acid). Residue N31 is modified to Asparagine amide. The propeptide occupies 64–153 (LERCLLQLQH…AVEPNDYGKH (90 aa)).

It belongs to the corazonin family. Expression is restricted to 24 neurons in the larval CNS (8 in the brain and 16 in the ventral nerve cord) and 12-16 neurons in the pars lateralis of the adult brain.

It is found in the secreted. In terms of biological role, cardioactive peptide. Corazonin is probably involved in the physiological regulation of the heart beat. Clock (Clk) and cycle (cyc) proteins negatively regulate Crz transcription in a cell-specific manner. The sequence is that of Pro-corazonin (Crz) from Drosophila virilis (Fruit fly).